We begin with the raw amino-acid sequence, 198 residues long: Glycerol-3-phosphate acyltransferase (198 aa).

The next 5 membrane-spanning stretches (helical) occupy residues 6–26, 56–78, 83–101, 113–133, and 154–174; these read MLPV…GLIL, LAAA…AGYL, AAML…PVWL, IGIL…VWLA, and IVLW…LTLL.

This sequence belongs to the PlsY family. In terms of assembly, probably interacts with PlsX.

It localises to the cell inner membrane. It carries out the reaction an acyl phosphate + sn-glycerol 3-phosphate = a 1-acyl-sn-glycero-3-phosphate + phosphate. The protein operates within lipid metabolism; phospholipid metabolism. Its function is as follows. Catalyzes the transfer of an acyl group from acyl-phosphate (acyl-PO(4)) to glycerol-3-phosphate (G3P) to form lysophosphatidic acid (LPA). This enzyme utilizes acyl-phosphate as fatty acyl donor, but not acyl-CoA or acyl-ACP. This is Glycerol-3-phosphate acyltransferase from Bradyrhizobium sp. (strain ORS 278).